Here is a 363-residue protein sequence, read N- to C-terminus: Protein CPn_1058/CP_0792/CPj1058/CpB1100 (363 aa).

Positions 1-27 (MKLYQTLRGIVLVSTGCIFLGMHGGYA) are cleaved as a signal peptide.

It belongs to the chlamydial CPn_1058/CT_355/TC_0634 family.

The chain is Protein CPn_1058/CP_0792/CPj1058/CpB1100 from Chlamydia pneumoniae (Chlamydophila pneumoniae).